Reading from the N-terminus, the 123-residue chain is MEKLRVFELRDKSDAELLKLLDDLKQELATFRVSKVTATGTSKLSKITLVRKAVAKVLTVYNQRKKEEARKKYKKLSKTPLNLRPKLTRAKRKALTTKQLTMKTIKERKRAENLPKRKYALLA.

The protein belongs to the universal ribosomal protein uL29 family.

This Theileria lestoquardi protein is Large ribosomal subunit protein uL29 (RPL35).